Reading from the N-terminus, the 51-residue chain is Ovomucoid (51 aa).

Positions 1–49 constitute a Kazal-like domain; that stretch reads VDCSEYPQPACTTERRPVCGSNNKTYSNKCNFCNAVVKSNGTLTVSHFG. 3 disulfide bridges follow: Cys-3–Cys-33, Cys-11–Cys-30, and Cys-19–Cys-51. Asn-40 is a glycosylation site (N-linked (GlcNAc...) asparagine).

It is found in the secreted. This chain is Ovomucoid, found in Polyplectron napoleonis (Palawan peacock-pheasant).